The primary structure comprises 315 residues: Porphobilinogen deaminase (315 aa).

Cysteine 242 bears the S-(dipyrrolylmethanemethyl)cysteine mark.

The protein belongs to the HMBS family. As to quaternary structure, monomer. Dipyrromethane serves as cofactor.

It carries out the reaction 4 porphobilinogen + H2O = hydroxymethylbilane + 4 NH4(+). It functions in the pathway porphyrin-containing compound metabolism; protoporphyrin-IX biosynthesis; coproporphyrinogen-III from 5-aminolevulinate: step 2/4. Functionally, tetrapolymerization of the monopyrrole PBG into the hydroxymethylbilane pre-uroporphyrinogen in several discrete steps. The protein is Porphobilinogen deaminase of Syntrophotalea carbinolica (strain DSM 2380 / NBRC 103641 / GraBd1) (Pelobacter carbinolicus).